A 175-amino-acid polypeptide reads, in one-letter code: Di-N-acetylchitobiase (175 aa).

A signal peptide spans 1 to 38 (MARLQLAGSRRLVPLPRRAPRLAPLLLPLLLALPDGAR). The GH18 domain occupies 39-175 (ADCPCKVPAL…SFHHEIKGSQ (137 aa)). N115 is a glycosylation site (N-linked (GlcNAc...) asparagine). E143 functions as the Proton donor in the catalytic mechanism.

It belongs to the glycosyl hydrolase 18 family.

It is found in the lysosome. Involved in the degradation of asparagine-linked glycoproteins. Hydrolyze of N-acetyl-beta-D-glucosamine (1-4)N-acetylglucosamine chitobiose core from the reducing end of the bond, it requires prior cleavage by glycosylasparaginase. The protein is Di-N-acetylchitobiase (CTBS) of Bos taurus (Bovine).